A 451-amino-acid polypeptide reads, in one-letter code: MICPDCGKGIEATFKFCPYCGKPLPAEKHEGSQSFVKPFTSSSQGSRRKTNTSSETSSKKVKWCSYAASPSLPLPSEGKSSGSEDTLSTSGKPKGHLSRSPTPRSSPQTTRQSPQTLKRSRMTASLEALPVGTVLTDKSGQHWKLRCLQTRDDQGILYEAESDSTTGSESSPQKQRFSLKLDAKDGRLFNEQNFFQRAAKPLQVNKWKKLYSIPQLAIPTCIGFGVHQDKYRFLVFPTLGRSLQSILDDFPKHVMSVRSVFQMACRLLDALEFLHENEYVHGNVTAENIFVNPENLCQVTLAGYGFTFRYSPGGRHVAYTEGSRSPHEGHLEFISMDLHKGCGPSRRSDLQTLGYCLLKWLYGTLPWTNCLPNTEEIVKLKQKFLDNPEGLVGQCSRWITPSETLQEYLKVVMALQYEEKPPYSTLRNELEALLQDLRASAYDPLDLQVVP.

2 disordered regions span residues 28 to 61 (KHEG…SKKV) and 74 to 125 (LPSE…MTAS). Over residues 32–45 (SQSFVKPFTSSSQG) the composition is skewed to polar residues. A Nuclear localization signal motif is present at residues 47-62 (RRKTNTSSETSSKKVK). 6 positions are modified to phosphoserine: Ser-53, Ser-57, Ser-80, Ser-81, Ser-88, and Ser-106. Over residues 78-91 (GKSSGSEDTLSTSG) the composition is skewed to polar residues. Residues 98–116 (SRSPTPRSSPQTTRQSPQT) show a composition bias toward low complexity. A Protein kinase domain is found at 123 to 434 (TASLEALPVG…TLRNELEALL (312 aa)).

The protein belongs to the protein kinase superfamily. CK1 Ser/Thr protein kinase family. VRK subfamily. Interacts with DUSP3. Interacts with RAN. Interacts with HSP70/HSPA1A. Phosphorylated at Ser-106 by CDK5; leading to protection of the cell against H2O2-induced apoptosis. In terms of processing, ubiquitinated by RNF144A.

The protein resides in the nucleus. It is found in the cytoplasm. The enzyme catalyses L-seryl-[protein] + ATP = O-phospho-L-seryl-[protein] + ADP + H(+). Functionally, plays a role in the regulation of the cell cycle by phosphorylating the nuclear envelope protein barrier-to-autointegration factor/BAF that is required for disassembly and reassembly, respectively, of the nuclear envelope during mitosis. Under normal physiological conditions, negatively regulates ERK activity along with VHR phosphatase in the nucleus, causing timely and transient action of ERK. Stress conditions activate CDK5 which phosphorylates VRK3 to increase VHR phosphatase activity and suppress prolonged ERK activation that causes cell death. For example, upon glutamate induction, promotes nuclear localization of HSP70/HSPA1A to inhibit ERK activation via VHR phosphatase. The sequence is that of Serine/threonine-protein kinase VRK3 (VRK3) from Bos taurus (Bovine).